The following is a 465-amino-acid chain: UDP-glycosyltransferase TURAN (465 aa).

Residues 1 to 75 (MGKRGRACVV…FIQYFPKILY (75 aa)) lie on the Cytoplasmic side of the membrane. A helical membrane pass occupies residues 76 to 96 (PVTLLLKAFIQFTMLLWFLFV). At 97 to 465 (KVPAPDIFLV…TQVVSQIADS (369 aa)) the chain is on the lumenal side. N-linked (GlcNAc...) asparagine glycosylation is present at Asn238.

It belongs to the glycosyltransferase group 1 family. Glycosyltransferase 33 subfamily.

The protein resides in the endoplasmic reticulum membrane. Its pathway is protein modification; protein glycosylation. Its function is as follows. Required for pollen tube (PT) growth and integrity by affecting the stability of the pollen-specific ANX1 and ANX2 proteins. Involved in protein N-glycosylation in the endoplasmic reticulum (ER), especially in the female gametophyte. Mediates PT reception in synergids through protein glycosylation. This is UDP-glycosyltransferase TURAN from Arabidopsis thaliana (Mouse-ear cress).